A 737-amino-acid chain; its full sequence is Photosystem I P700 chlorophyll a apoprotein A2 (737 aa).

Transmembrane regions (helical) follow at residues 46–69, 135–158, 175–199, 273–291, 330–353, 369–395, 417–439, and 520–538; these read IFASHFGHLAIIFLWTSGNLFHVA, LYNGAIFLLILSALSLFAGWLHLQ, LNHHLGGLFGTSSLAWTGHIVHVAI, IAHHHLAIAVLFIVAGHMY, LHFQLGLALAALGVITSLVAQHMY, AALYTHHQYIAGFLMVGAFAHGAIFLV, AIISHLSWVSLFLGFHTLGLYVH, and FLVHHAIALGLHTTTLILV. 2 residues coordinate [4Fe-4S] cluster: cysteine 562 and cysteine 571. The next 2 membrane-spanning stretches (helical) occupy residues 578–599 and 646–668; these read AFYLAVFWMLNTIGWTTFYWHW and LSVWAWMFLFGHLIWATGFMFLI. Histidine 657, methionine 665, and tyrosine 673 together coordinate chlorophyll a. Tryptophan 674 lines the phylloquinone pocket. Residues 710 to 730 traverse the membrane as a helical segment; that stretch reads LVGLAHFAVGYIVTYAAFLIA.

The protein belongs to the PsaA/PsaB family. As to quaternary structure, the PsaA/B heterodimer binds the P700 chlorophyll special pair and subsequent electron acceptors. PSI consists of a core antenna complex that captures photons, and an electron transfer chain that converts photonic excitation into a charge separation. The eukaryotic PSI reaction center is composed of at least 11 subunits. Requires P700 is a chlorophyll a/chlorophyll a' dimer, A0 is one or more chlorophyll a, A1 is one or both phylloquinones and FX is a shared 4Fe-4S iron-sulfur center. as cofactor.

The protein localises to the plastid. It localises to the cyanelle thylakoid membrane. The enzyme catalyses reduced [plastocyanin] + hnu + oxidized [2Fe-2S]-[ferredoxin] = oxidized [plastocyanin] + reduced [2Fe-2S]-[ferredoxin]. In terms of biological role, psaA and PsaB bind P700, the primary electron donor of photosystem I (PSI), as well as the electron acceptors A0, A1 and FX. PSI is a cytochrome c6-ferredoxin oxidoreductase, converting photonic excitation into a charge separation, which transfers an electron from the donor P700 chlorophyll pair to the spectroscopically characterized acceptors A0, A1, FX, FA and FB in turn. Oxidized P700 is reduced on the lumenal side of the thylakoid membrane by cytochrome c6. In Cyanophora paradoxa, this protein is Photosystem I P700 chlorophyll a apoprotein A2.